The chain runs to 278 residues: Potassium/proton antiporter CemA (278 aa).

4 consecutive transmembrane segments (helical) span residues 61–81 (VVFL…FLFG), 154–174 (CAIT…SILI), 203–223 (IILF…EVII), and 238–258 (FIFV…KYWI).

The protein belongs to the CemA family.

Its subcellular location is the plastid. The protein resides in the chloroplast inner membrane. It carries out the reaction K(+)(in) + H(+)(out) = K(+)(out) + H(+)(in). Its function is as follows. Contributes to K(+)/H(+) antiport activity by supporting proton efflux to control proton extrusion and homeostasis in chloroplasts in a light-dependent manner to modulate photosynthesis. Prevents excessive induction of non-photochemical quenching (NPQ) under continuous-light conditions. Indirectly promotes efficient inorganic carbon uptake into chloroplasts. The polypeptide is Potassium/proton antiporter CemA (Gracilaria tenuistipitata var. liui (Red alga)).